An 808-amino-acid chain; its full sequence is Probable inorganic carbon transporter subunit DabA (808 aa).

Residues cysteine 334, aspartate 336, histidine 494, and cysteine 509 each coordinate Zn(2+).

This sequence belongs to the inorganic carbon transporter (TC 9.A.2) DabA family. Forms a complex with DabB. Requires Zn(2+) as cofactor.

Its subcellular location is the cell inner membrane. In terms of biological role, part of an energy-coupled inorganic carbon pump. The chain is Probable inorganic carbon transporter subunit DabA from Rhodopseudomonas palustris (strain BisB5).